The following is a 251-amino-acid chain: Flap endonuclease Xni (251 aa).

Asp104 is a Mg(2+) binding site. The region spanning 160-249 (VLPRQLPDYW…IDGNLQQLRL (90 aa)) is the 5'-3' exonuclease domain. Positions 171, 172, 180, 182, and 185 each coordinate K(+). The interaction with DNA stretch occupies residues 184–189 (GIGPKS).

It belongs to the Xni family. Mg(2+) serves as cofactor. Requires K(+) as cofactor.

In terms of biological role, has flap endonuclease activity. During DNA replication, flap endonucleases cleave the 5'-overhanging flap structure that is generated by displacement synthesis when DNA polymerase encounters the 5'-end of a downstream Okazaki fragment. This is Flap endonuclease Xni from Salmonella dublin (strain CT_02021853).